The chain runs to 338 residues: MIEDLKELQNKAEAEIKAAKTETDLAAVRVRYLGRKGLLTQFLRNLGQLSIEEKQIFGKRANEIKTILSSRFDEAQTVIAALKKESVLRAEALDVTLPGRSSGYGRAHPVTQVLEEICAIFSEIGFSIAEGPEIESDYYNFEALNIPKDHPARDMQDTFYVEEAIVLRTHTSPVQIRTMEKQSPPVKIISPGRVYRPDSDVSHTPMFHQVEGLLVDRGITFGDLKGLLNAFLKQIFGEETVLRFRPSYFPFTEPSAEVDIRCVICRGKGCRVCGQSGWLEILGSGMVDPAVFENVGYDPEEYSGFAFGLGVERIAMLKYGITDIRLFFENERRFLQQF.

Residue E253 participates in Mg(2+) binding.

It belongs to the class-II aminoacyl-tRNA synthetase family. Phe-tRNA synthetase alpha subunit type 1 subfamily. As to quaternary structure, tetramer of two alpha and two beta subunits. Mg(2+) serves as cofactor.

The protein localises to the cytoplasm. The catalysed reaction is tRNA(Phe) + L-phenylalanine + ATP = L-phenylalanyl-tRNA(Phe) + AMP + diphosphate + H(+). The sequence is that of Phenylalanine--tRNA ligase alpha subunit from Syntrophus aciditrophicus (strain SB).